The sequence spans 187 residues: Cell division protein SepF (187 aa).

The tract at residues 21 to 97 is disordered; that stretch reads EVEVPDKQQQ…ATPNNASQES (77 aa). Polar residues-rich tracts occupy residues 38-63 and 70-97; these read EQSQ…YTTT and RMSN…SQES.

The protein belongs to the SepF family. As to quaternary structure, homodimer. Interacts with FtsZ.

The protein localises to the cytoplasm. Its function is as follows. Cell division protein that is part of the divisome complex and is recruited early to the Z-ring. Probably stimulates Z-ring formation, perhaps through the cross-linking of FtsZ protofilaments. Its function overlaps with FtsA. This chain is Cell division protein SepF, found in Staphylococcus aureus (strain Mu3 / ATCC 700698).